Consider the following 292-residue polypeptide: ATP phosphoribosyltransferase (292 aa).

It belongs to the ATP phosphoribosyltransferase family. Long subfamily. Requires Mg(2+) as cofactor.

The protein localises to the cytoplasm. It catalyses the reaction 1-(5-phospho-beta-D-ribosyl)-ATP + diphosphate = 5-phospho-alpha-D-ribose 1-diphosphate + ATP. The protein operates within amino-acid biosynthesis; L-histidine biosynthesis; L-histidine from 5-phospho-alpha-D-ribose 1-diphosphate: step 1/9. Feedback inhibited by histidine. Functionally, catalyzes the condensation of ATP and 5-phosphoribose 1-diphosphate to form N'-(5'-phosphoribosyl)-ATP (PR-ATP). Has a crucial role in the pathway because the rate of histidine biosynthesis seems to be controlled primarily by regulation of HisG enzymatic activity. This chain is ATP phosphoribosyltransferase, found in Gemmatimonas aurantiaca (strain DSM 14586 / JCM 11422 / NBRC 100505 / T-27).